An 81-amino-acid chain; its full sequence is Photosystem I iron-sulfur center (81 aa).

2 consecutive 4Fe-4S ferredoxin-type domains span residues 2 to 31 and 39 to 68; these read SHTV…MAPW and VASA…VRVY. [4Fe-4S] cluster-binding residues include Cys11, Cys14, Cys17, Cys21, Cys48, Cys51, Cys54, and Cys58.

In terms of assembly, the eukaryotic PSI reaction center is composed of at least 11 subunits. It depends on [4Fe-4S] cluster as a cofactor.

It localises to the plastid. Its subcellular location is the chloroplast thylakoid membrane. It catalyses the reaction reduced [plastocyanin] + hnu + oxidized [2Fe-2S]-[ferredoxin] = oxidized [plastocyanin] + reduced [2Fe-2S]-[ferredoxin]. Apoprotein for the two 4Fe-4S centers FA and FB of photosystem I (PSI); essential for photochemical activity. FB is the terminal electron acceptor of PSI, donating electrons to ferredoxin. The C-terminus interacts with PsaA/B/D and helps assemble the protein into the PSI complex. Required for binding of PsaD and PsaE to PSI. PSI is a plastocyanin/cytochrome c6-ferredoxin oxidoreductase, converting photonic excitation into a charge separation, which transfers an electron from the donor P700 chlorophyll pair to the spectroscopically characterized acceptors A0, A1, FX, FA and FB in turn. The sequence is that of Photosystem I iron-sulfur center from Tupiella akineta (Green alga).